We begin with the raw amino-acid sequence, 1400 residues long: DNA-directed RNA polymerase subunit beta' (1400 aa).

Zn(2+) is bound by residues Cys-71, Cys-73, Cys-86, and Cys-89. Asp-462, Asp-464, and Asp-466 together coordinate Mg(2+). Cys-811, Cys-885, Cys-892, and Cys-895 together coordinate Zn(2+).

It belongs to the RNA polymerase beta' chain family. In terms of assembly, the RNAP catalytic core consists of 2 alpha, 1 beta, 1 beta' and 1 omega subunit. When a sigma factor is associated with the core the holoenzyme is formed, which can initiate transcription. It depends on Mg(2+) as a cofactor. Zn(2+) serves as cofactor.

The catalysed reaction is RNA(n) + a ribonucleoside 5'-triphosphate = RNA(n+1) + diphosphate. Its function is as follows. DNA-dependent RNA polymerase catalyzes the transcription of DNA into RNA using the four ribonucleoside triphosphates as substrates. In Brucella ovis (strain ATCC 25840 / 63/290 / NCTC 10512), this protein is DNA-directed RNA polymerase subunit beta'.